The following is a 340-amino-acid chain: 4-hydroxythreonine-4-phosphate dehydrogenase (340 aa).

A substrate-binding site is contributed by Thr-135. Positions 170, 215, and 276 each coordinate a divalent metal cation. Residues Lys-284, Asn-293, and Arg-302 each coordinate substrate.

This sequence belongs to the PdxA family. Homodimer. Requires a divalent metal cation as cofactor.

It localises to the cytoplasm. It carries out the reaction 4-(phosphooxy)-L-threonine + NAD(+) = 3-amino-2-oxopropyl phosphate + CO2 + NADH. It functions in the pathway cofactor biosynthesis; pyridoxine 5'-phosphate biosynthesis; pyridoxine 5'-phosphate from D-erythrose 4-phosphate: step 4/5. Its function is as follows. Catalyzes the NAD(P)-dependent oxidation of 4-(phosphooxy)-L-threonine (HTP) into 2-amino-3-oxo-4-(phosphooxy)butyric acid which spontaneously decarboxylates to form 3-amino-2-oxopropyl phosphate (AHAP). This chain is 4-hydroxythreonine-4-phosphate dehydrogenase, found in Synechococcus sp. (strain JA-2-3B'a(2-13)) (Cyanobacteria bacterium Yellowstone B-Prime).